A 205-amino-acid polypeptide reads, in one-letter code: Small ribosomal subunit protein uS4 (205 aa).

An S4 RNA-binding domain is found at 103–173; it reads RRLQTIVMKK…LEKSKRAEAA (71 aa). Residues 174–205 are disordered; it reads AREAAAEAAEAEQAAAQAAAPTPAPAAAAPKQ. A compositionally biased stretch (low complexity) spans 179–205; the sequence is AEAAEAEQAAAQAAAPTPAPAAAAPKQ.

Belongs to the universal ribosomal protein uS4 family. Part of the 30S ribosomal subunit. Contacts protein S5. The interaction surface between S4 and S5 is involved in control of translational fidelity.

One of the primary rRNA binding proteins, it binds directly to 16S rRNA where it nucleates assembly of the body of the 30S subunit. Functionally, with S5 and S12 plays an important role in translational accuracy. This is Small ribosomal subunit protein uS4 from Cenarchaeum symbiosum (strain A).